The chain runs to 577 residues: Anthranilate synthase alpha subunit 1, chloroplastic (577 aa).

Residues 1-34 (MASLVLSLRIAPSTPPLGLGGGRFRGRRGAVACR) constitute a chloroplast transit peptide.

The protein belongs to the anthranilate synthase component I family. In terms of assembly, heterotetramer consisting of two non-identical subunits: a beta subunit and a large alpha subunit.

The protein localises to the plastid. It is found in the chloroplast. The catalysed reaction is chorismate + L-glutamine = anthranilate + pyruvate + L-glutamate + H(+). Its pathway is amino-acid biosynthesis; L-tryptophan biosynthesis; L-tryptophan from chorismate: step 1/5. Its activity is regulated as follows. Feedback inhibition by tryptophan. Its function is as follows. Part of a heterotetrameric complex that catalyzes the two-step biosynthesis of anthranilate, an intermediate in the biosynthesis of L-tryptophan. In the first step, the glutamine-binding beta subunit of anthranilate synthase (AS) provides the glutamine amidotransferase activity which generates ammonia as a substrate that, along with chorismate, is used in the second step, catalyzed by the large alpha subunit of AS to produce anthranilate. This chain is Anthranilate synthase alpha subunit 1, chloroplastic, found in Oryza sativa subsp. japonica (Rice).